Consider the following 1452-residue polypeptide: Pleiotropic drug resistance protein 1 (1452 aa).

The ABC transporter 1 domain maps to 152 to 425 (LNYLHILPNR…FEYMGFICPE (274 aa)). Residue 185–192 (GPPSSGKT) participates in ATP binding. Positions 504-716 (LLKACTAREY…AQNAIAVNEF (213 aa)) constitute an ABC transmembrane type-2 1 domain. 7 helical membrane passes run 521–541 (FVYIFKMIQLTLMASITMTLF), 554–574 (GAVFLGALFYALIMIMFNGFS), 609–629 (IPITLVEVAIWVCMTYYVIGF), 640–660 (LLLLICVNQMASGLFRLMGAL), 664–684 (IIVANTFGSFVLLTVLVMGGF), 694–714 (WWIWGYWISPMMYAQNAIAVN), and 753–773 (IGAGALIGYVFLFNFLFAVAL). The segment at 808–830 (LGKSSSEKGNDVRRSASSRSMSS) is disordered. Residues 812-821 (SSEKGNDVRR) show a composition bias toward basic and acidic residues. One can recognise an ABC transporter 2 domain in the interval 855 to 1107 (ITFDDIRYAV…HLIKYFEGID (253 aa)). 900–907 (GVSGAGKT) provides a ligand contact to ATP. The 215-residue stretch at 1180-1394 (TQCMACFWKQ…TLYGLIASQF (215 aa)) folds into the ABC transmembrane type-2 2 domain. The next 7 membrane-spanning stretches (helical) occupy residues 1199-1219 (YTAVRIMFTFFIALMFGTIFW), 1239-1259 (YIAVLFLGVQNATTVQPVIAI), 1287-1307 (LPYLFLQTIIYGVIVYAMIGF), 1314-1334 (FFWYLFFMYFTLLYFTLYGMM), 1344-1364 (IAAIISSAFYAVWNLFCGFIV), 1375-1395 (WYYYICPISWTLYGLIASQFG), and 1421-1441 (FVGYVALILVGISVLFLFIFA).

The protein belongs to the ABC transporter superfamily. ABCG family. PDR (TC 3.A.1.205) subfamily. Expressed in root hypodermal passage cells. Expressed in stem tissues, particularly the vasculature and nodes adjacent to leaf axils.

It is found in the cell membrane. Cellular strigolactone (SL) transporter required for the exudation of SL from the root to the soil. The presence of SL in the vicinity of the roots is required for development of symbiotic interactions with arbuscular mycorrhizal fungi (AMF). Transports SL in the above ground tissues and is required for the control of shoot branching. SL regulates plant shoot architecture by inhibiting the outgrowth of axillary buds. Involved in the regulation of shootward and outward directional strigolactone transport in roots. Due to its polar localization in root cells, mediates directional shootward strigolactone transport, as well as localized outward directional transport for exudation to the soil. In Petunia axillaris (Large white petunia), this protein is Pleiotropic drug resistance protein 1.